Reading from the N-terminus, the 606-residue chain is Electron transfer flavoprotein-ubiquinone oxidoreductase, mitochondrial (606 aa).

Position 59–73 (59–73) interacts with FAD; the sequence is VVIVGAGPSGLSTAI. Residues 448–468 form a helical membrane-spanning segment; that stretch reads PSLHWGTIPGLIYGALEMYIF. [4Fe-4S] cluster is bound by residues C551, C575, C578, and C581.

The protein belongs to the ETF-QO/FixC family. As to quaternary structure, monomer. Requires [4Fe-4S] cluster as cofactor. FAD is required as a cofactor.

The protein resides in the mitochondrion inner membrane. It carries out the reaction a ubiquinone + reduced [electron-transfer flavoprotein] = a ubiquinol + oxidized [electron-transfer flavoprotein] + H(+). Its function is as follows. Accepts electrons from ETF and reduces ubiquinone. The polypeptide is Electron transfer flavoprotein-ubiquinone oxidoreductase, mitochondrial (etfdh) (Dictyostelium discoideum (Social amoeba)).